We begin with the raw amino-acid sequence, 144 residues long: uncharacterized protein (144 aa).

A coiled-coil region spans residues 24 to 67; sequence KLKELYQRLNQGINVEEVLKETVEDYKEKMEKYILEVLEEIEKY.

This is an uncharacterized protein from Aquifex aeolicus (strain VF5).